The chain runs to 502 residues: Premnaspirodiene oxygenase (502 aa).

Residues 2 to 22 form a helical membrane-spanning segment; that stretch reads QFFSLVSIFLFLSFLFLLRKW. C440 is a heme binding site.

The protein belongs to the cytochrome P450 family. Heme serves as cofactor.

The protein localises to the membrane. It carries out the reaction (-)-vetispiradiene + 2 reduced [NADPH--hemoprotein reductase] + 2 O2 = solavetivone + 2 oxidized [NADPH--hemoprotein reductase] + 3 H2O + 2 H(+). Involved in the biosynthesis of solavetivone, a potent antifungal phytoalexin. Catalyzes the successive and independent hydroxylations of premnaspirodiene and solavetivol. The first hydroxylation step is 3-fold more efficient than the second hydroxylation reaction. The protein is Premnaspirodiene oxygenase (CYP71D55) of Hyoscyamus muticus (Egyptian henbane).